The chain runs to 255 residues: UPF0246 protein Caul_4480 (255 aa).

The protein belongs to the UPF0246 family.

The sequence is that of UPF0246 protein Caul_4480 from Caulobacter sp. (strain K31).